Reading from the N-terminus, the 533-residue chain is Retinoid isomerohydrolase (533 aa).

A lipid anchor (S-palmitoyl cysteine; in membrane form) is attached at C112. Phosphoserine is present on S117. H180 contacts Fe cation. C231 carries S-palmitoyl cysteine; in membrane form lipidation. Positions 241 and 313 each coordinate Fe cation. C329 carries the S-palmitoyl cysteine; in membrane form lipid modification. Residue H527 coordinates Fe cation.

The protein belongs to the carotenoid oxygenase family. Fe(2+) is required as a cofactor. Palmitoylation by LRAT regulates ligand binding specificity; the palmitoylated form (membrane form) specifically binds all-trans-retinyl-palmitate, while the soluble unpalmitoylated form binds all-trans-retinol (vitamin A). Retinal pigment epithelium specific.

The protein resides in the cytoplasm. The protein localises to the cell membrane. Its subcellular location is the microsome membrane. It carries out the reaction an all-trans-retinyl ester + H2O = 11-cis-retinol + a fatty acid + H(+). It catalyses the reaction lutein = (3R,3'S)-zeaxanthin. The catalysed reaction is all-trans-retinyl hexadecanoate + H2O = 11-cis-retinol + hexadecanoate + H(+). In terms of biological role, critical isomerohydrolase in the retinoid cycle involved in regeneration of 11-cis-retinal, the chromophore of rod and cone opsins. Catalyzes the cleavage and isomerization of all-trans-retinyl fatty acid esters to 11-cis-retinol which is further oxidized by 11-cis retinol dehydrogenase to 11-cis-retinal for use as visual chromophore. Essential for the production of 11-cis retinal for both rod and cone photoreceptors. Also capable of catalyzing the isomerization of lutein to meso-zeaxanthin an eye-specific carotenoid. The soluble form binds vitamin A (all-trans-retinol), making it available for LRAT processing to all-trans-retinyl ester. The membrane form, palmitoylated by LRAT, binds all-trans-retinyl esters, making them available for IMH (isomerohydrolase) processing to all-cis-retinol. The soluble form is regenerated by transferring its palmitoyl groups onto 11-cis-retinol, a reaction catalyzed by LRAT. In Gallus gallus (Chicken), this protein is Retinoid isomerohydrolase (RPE65).